A 1499-amino-acid chain; its full sequence is MLSFIQYTLGIMSSLGNGNNQHNINSNTGSSQNSAAEGTMERGSCILVRYASQNSLDESSQKQLPRSNGKEKTTGAYRNNIHTQRSFEAMNMMREQNLLCDVVLVAEGIEIPAHKMVLASCSPYFYAMFTGFEESRQDRITLQGVDPRALQLLIEYVYRAVVEVTEDNVQILLTAANLLQLTDVRDACCDYLQTQLDPSNCLGIRDFADIHGCIDLLNYAETYIEQHFSEVVQFDEFLNLTSDQVAHLIKSDRLSVPTEEKVYECVITWIQYDVNGRQHHLAELMEHVRLPLLSQDYLVQYVEKEQLMKGDLQCKDYIIEALKYHLLKGEQKTCFKTPRTIPRQPVGLPKVLLVIGGQAPKAIRSVECYDLREEKWYQVAEMPTRRCRAGLAVLGDKVYAVGGFNGSLRVKTVDVYDPVLDQWTTSHNMEARRSTLGVAVLNNCIYAVGGFDGSTGLSSAEMFDPKRQEWRLIASMSTRRSSVGVGVVNGLLYAVGGYDGASRQCLASVERYNPSTDTWTQIAEMSARRSGAGVGVLDNILYAVGGHDGPLVRKSVEAYDPATNTWRAVGDMAFCRRNAGVVAHNGMLYVVGGDDGLSNLASVEVYSPESDSWRILPSSMSIGRSYAGVAMIDKPLUSEQQGARVATKQSYASHHPTGTIYSRYANCAALQQAQNEAAAGQAAGFGNDDENSQAEGLNPEPANSNNSAPNGNNVHYENIYESIEQFAPLNGGNGGNGGAHAGIPAGSNPLQYAVLNQPQPGPSGLGPGQAHRSLGGERGAVGGGGGGGGAVGGGCIPPPPPSMLHSMQQLYHPMAYRNELYDRTAGYDVPRGRPAPSYYQNQPPTGPSANGRCPNLHLDLNRVRYPSGASAQQQQRTPRQRSFDDTESYHYYRCQNQSNGTAKYDNLYERVREEPAYQNTGSFAPAANRAAGLFGRFDVIGHGVGRIERHLSSSCGNIDHYSLGGHYAVLGHSHLGTMGHIRLNQSNSSSASSASPYGANGPATTSQPNPTKDSSSVNVKSFLSCLGGENSQSMNNLNKSSAAHGTASGSAPAANGNEATLPGSISGGASGGGAGGAGSSGGNGGQGSSIMGGLASAAAVGVNGTGASTSTTLGGKSTGAIPKISRKSKQSQQQGPSDPTAGTSAPQSLAGGNGLPPVDVSLGAPADPMYANGCGGRVTKPSLQWLLVNKWLPLWVGQTPPDYKFIDFNFMFSRNCDGCSSAGGSHGQQQQQPQELVRYGTIDQADYIPPAREYPTMTGSYPRVLRNTPQLARLREHEYENVPLNDPPPGRGLRGIASPLQVGRARSESPSRPPGSDPLRTWAFDFENNTFRPARSPALATSSGLAINREKPREVRRITDGTFGARDLAQPDTEKPGPSGLASKLALLKQPEPDKEDGRLSSASSSSDSDNFAIESLAAESSGGQPDEEEEEEGGSTRSGVGRRDDGGRVVGNSTEKENVGSSSNETSDSLNYDGPASADRSLSEDEVEAARPDNTASE.

The span at 56 to 66 (LDESSQKQLPR) shows a compositional bias: polar residues. A disordered region spans residues 56 to 75 (LDESSQKQLPRSNGKEKTTG). Positions 100-166 (CDVVLVAEGI…VYRAVVEVTE (67 aa)) constitute a BTB domain. 6 Kelch repeats span residues 351–396 (VLLV…VLGD), 397–443 (KVYA…VLNN), 444–490 (CIYA…VVNG), 492–539 (LYAV…VLDN), 541–586 (LYAV…AHNG), and 588–634 (LYVV…MIDK). A non-standard amino acid (selenocysteine) is located at residue Sec637. Disordered stretches follow at residues 679 to 714 (AGQA…GNNV), 750 to 786 (LQYA…GGGG), 825 to 856 (AGYD…CPNL), 984 to 1017 (NQSN…SSSV), 1033 to 1085 (SMNN…GNGG), 1107 to 1160 (ASTS…PVDV), 1301 to 1321 (QVGR…PLRT), and 1334 to 1499 (ARSP…TASE). Residues 698–713 (NPEPANSNNSAPNGNN) show a composition bias toward low complexity. A compositionally biased stretch (gly residues) spans 776–786 (GERGAVGGGGG). The segment covering 986-1003 (SNSSSASSASPYGANGPA) has biased composition (low complexity). A compositionally biased stretch (polar residues) spans 1004–1017 (TTSQPNPTKDSSSV). Over residues 1040–1054 (SSAAHGTASGSAPAA) the composition is skewed to low complexity. Residues 1065–1085 (ISGGASGGGAGGAGSSGGNGG) are compositionally biased toward gly residues. The span at 1107–1119 (ASTSTTLGGKSTG) shows a compositional bias: low complexity. A compositionally biased stretch (polar residues) spans 1135–1147 (GPSDPTAGTSAPQ). Residues 1348–1359 (NREKPREVRRIT) are compositionally biased toward basic and acidic residues. The segment covering 1401 to 1410 (SSASSSSDSD) has biased composition (low complexity). Positions 1460 to 1471 (VGSSSNETSDSL) are enriched in polar residues.

It localises to the cytoplasm. The protein localises to the cytoskeleton. Its function is as follows. May play a role in organizing the actin cytoskeleton. The polypeptide is Ring canal kelch homolog (Anopheles stephensi (Indo-Pakistan malaria mosquito)).